The following is a 148-amino-acid chain: Transcriptional repressor NrdR (148 aa).

The disordered stretch occupies residues 1–22 (MKCPYCSAPDSKVVNSRPSDDG). The segment at 3–34 (CPYCSAPDSKVVNSRPSDDGASIRRRRECLNC) is a zinc-finger region. The ATP-cone domain occupies 49–136 (LMVVKRSGPR…VYRDFDSLER (88 aa)).

It belongs to the NrdR family. Zn(2+) is required as a cofactor.

Negatively regulates transcription of bacterial ribonucleotide reductase nrd genes and operons by binding to NrdR-boxes. The chain is Transcriptional repressor NrdR from Deinococcus deserti (strain DSM 17065 / CIP 109153 / LMG 22923 / VCD115).